The primary structure comprises 966 residues: Probable transport protein MmpL11 (966 aa).

Helical transmembrane passes span 13-33, 188-208, 214-234, 235-255, 279-299, 311-331, 373-393, 527-547, 557-577, 595-615, 646-666, and 668-688; these read WLVF…AMTQ, IILM…IPLA, VVIT…SVFV, TSTV…FILM, GLAV…IYLI, AILA…AVLA, ALAA…MVLG, TQPL…LISI, VLMT…VFQW, VPPL…IFLL, AALI…PLVA, and IGVA…LVLV.

It belongs to the resistance-nodulation-cell division (RND) (TC 2.A.6) family. MmpL subfamily.

The protein localises to the cell membrane. The polypeptide is Probable transport protein MmpL11 (mmpL11) (Mycobacterium bovis (strain ATCC BAA-935 / AF2122/97)).